Reading from the N-terminus, the 615-residue chain is Probable ATP-citrate synthase subunit 1 (615 aa).

ATP-binding positions include Leu-221 to Gly-241 and Phe-272 to Ala-298. Glu-238 serves as a coordination point for Mg(2+). The active-site Tele-phosphohistidine intermediate is His-280. Met-299–Thr-309 provides a ligand contact to CoA. At Ser-359 the chain carries Phosphoserine.

Belongs to the succinate/malate CoA ligase alpha subunit family. Composed of two subunits.

Its subcellular location is the cytoplasm. The catalysed reaction is oxaloacetate + acetyl-CoA + ADP + phosphate = citrate + ATP + CoA. In terms of biological role, catalyzes the formation of cytosolic acetyl-CoA, which is mainly used for the biosynthesis of fatty acids and sterols. This Schizosaccharomyces pombe (strain 972 / ATCC 24843) (Fission yeast) protein is Probable ATP-citrate synthase subunit 1.